Here is a 310-residue protein sequence, read N- to C-terminus: Homoserine kinase (310 aa).

91 to 101 (PIGSGLGSSAC) contributes to the ATP binding site.

It belongs to the GHMP kinase family. Homoserine kinase subfamily.

The protein localises to the cytoplasm. It carries out the reaction L-homoserine + ATP = O-phospho-L-homoserine + ADP + H(+). It functions in the pathway amino-acid biosynthesis; L-threonine biosynthesis; L-threonine from L-aspartate: step 4/5. Catalyzes the ATP-dependent phosphorylation of L-homoserine to L-homoserine phosphate. The protein is Homoserine kinase of Sodalis glossinidius (strain morsitans).